The primary structure comprises 330 residues: Tryptophan--tRNA ligase (330 aa).

ATP-binding positions include 10 to 12 (QTT) and 18 to 19 (GN). Positions 11–19 (TTGALHLGN) match the 'HIGH' region motif. Residue D134 participates in L-tryptophan binding. Residues 146-148 (GED), I186, and 195-199 (KMSKS) each bind ATP. The 'KMSKS' region motif lies at 195–199 (KMSKS).

It belongs to the class-I aminoacyl-tRNA synthetase family. As to quaternary structure, homodimer.

The protein localises to the cytoplasm. The catalysed reaction is tRNA(Trp) + L-tryptophan + ATP = L-tryptophyl-tRNA(Trp) + AMP + diphosphate + H(+). Functionally, catalyzes the attachment of tryptophan to tRNA(Trp). This is Tryptophan--tRNA ligase from Rickettsia prowazekii (strain Madrid E).